The following is a 144-amino-acid chain: Putative pre-16S rRNA nuclease (144 aa).

It belongs to the YqgF nuclease family.

It is found in the cytoplasm. Could be a nuclease involved in processing of the 5'-end of pre-16S rRNA. The sequence is that of Putative pre-16S rRNA nuclease from Pseudomonas paraeruginosa (strain DSM 24068 / PA7) (Pseudomonas aeruginosa (strain PA7)).